Here is a 141-residue protein sequence, read N- to C-terminus: Large ribosomal subunit protein uL11 (141 aa).

The protein belongs to the universal ribosomal protein uL11 family. Part of the ribosomal stalk of the 50S ribosomal subunit. Interacts with L10 and the large rRNA to form the base of the stalk. L10 forms an elongated spine to which L12 dimers bind in a sequential fashion forming a multimeric L10(L12)X complex. Post-translationally, one or more lysine residues are methylated.

In terms of biological role, forms part of the ribosomal stalk which helps the ribosome interact with GTP-bound translation factors. In Lactococcus lactis subsp. cremoris (strain MG1363), this protein is Large ribosomal subunit protein uL11.